A 264-amino-acid chain; its full sequence is MRIALGIEYNGTDYFGWQRQREVASVQEKLEKALSKVANHPVEVQCAGRTDAGVHGTGQVVHFDTNVERKMVAWTMGANANLPKDIAVRWAKAVPDEFHARFSATARRYRYIIFNHALRPGILGSGVSHYHGELDEKKMHEAGQYLLGENDFTSFRAVQCQSLSPFRNMIHLNVTRHGHYVVIDIKANAFVHHMVRNITGSLIMVGRGEQDPEWIKWLLEAKDRKLAGPTAKAEGLYLVDVDYPEEFDLPRESIGPLFLPDNLN.

Asp51 acts as the Nucleophile in catalysis. A substrate-binding site is contributed by Tyr109.

It belongs to the tRNA pseudouridine synthase TruA family. In terms of assembly, homodimer.

It catalyses the reaction uridine(38/39/40) in tRNA = pseudouridine(38/39/40) in tRNA. Functionally, formation of pseudouridine at positions 38, 39 and 40 in the anticodon stem and loop of transfer RNAs. This Vibrio vulnificus (strain CMCP6) protein is tRNA pseudouridine synthase A.